A 226-amino-acid chain; its full sequence is Isoprenyl transferase (226 aa).

Asp12 is a catalytic residue. Asp12 is a binding site for Mg(2+). Substrate is bound by residues 13–16 (GNAR), Trp17, Lys25, His29, and 57–59 (SSE). The active-site Proton acceptor is the Asn60. Substrate contacts are provided by residues Trp61, Arg63, Arg174, and 180 to 182 (RIS). A Mg(2+)-binding site is contributed by Glu193.

Belongs to the UPP synthase family. Homodimer. Mg(2+) serves as cofactor.

In terms of biological role, catalyzes the condensation of isopentenyl diphosphate (IPP) with allylic pyrophosphates generating different type of terpenoids. This is Isoprenyl transferase from Rickettsia bellii (strain RML369-C).